The primary structure comprises 450 residues: Keratin, type I cytoskeletal 25 (450 aa).

Positions 1-25 (MSLRLPSGSRRASPRPTTGSLRLSS) are disordered. The interval 1–78 (MSLRLPSGSR…VNEGGLLSGN (78 aa)) is head. The tract at residues 79 to 114 (EKVTMQNLNDRLASYLENVRALEEANADLEQKIKGW) is coil 1A. Residues 79–394 (EKVTMQNLND…LLIGGDDGAC (316 aa)) form the IF rod domain. A linker 1 region spans residues 115–136 (YEKFGPGSCRGLDHDYSRYFPI). A coil 1B region spans residues 137–228 (IEDLKNQIIA…KNHKEEMQVL (92 aa)). The segment at 229 to 251 (QCAAGGNVNVEMNAAPGVDLTVL) is linker 12. Residues 252–390 (LNNMRAEYEA…ETYCLLIGGD (139 aa)) form a coil 2 region. The interval 391–450 (DGACKSGGYKSKDYGAGNVGNQMKDPVKAIVVKKVLEEVDQRSKILTPRLHSLEEKSQSN) is tail. At serine 442 the chain carries Phosphoserine.

Belongs to the intermediate filament family. Heterodimer of a type I and a type II keratin. Heterodimer with type II keratin KRT5 leading to the formation of keratin intermediate filament (KIF) network. Interacts with KRT6A to form filaments.

Its subcellular location is the cytoplasm. Its function is as follows. Essential for the proper assembly of type I and type II keratin protein complexes and formation of keratin intermediate filaments in the inner root sheath (irs). Plays a role in the cytoskeleton organization. The sequence is that of Keratin, type I cytoskeletal 25 from Bos taurus (Bovine).